The chain runs to 95 residues: Aspartyl/glutamyl-tRNA(Asn/Gln) amidotransferase subunit C (95 aa).

It belongs to the GatC family. In terms of assembly, heterotrimer of A, B and C subunits.

It carries out the reaction L-glutamyl-tRNA(Gln) + L-glutamine + ATP + H2O = L-glutaminyl-tRNA(Gln) + L-glutamate + ADP + phosphate + H(+). The catalysed reaction is L-aspartyl-tRNA(Asn) + L-glutamine + ATP + H2O = L-asparaginyl-tRNA(Asn) + L-glutamate + ADP + phosphate + 2 H(+). In terms of biological role, allows the formation of correctly charged Asn-tRNA(Asn) or Gln-tRNA(Gln) through the transamidation of misacylated Asp-tRNA(Asn) or Glu-tRNA(Gln) in organisms which lack either or both of asparaginyl-tRNA or glutaminyl-tRNA synthetases. The reaction takes place in the presence of glutamine and ATP through an activated phospho-Asp-tRNA(Asn) or phospho-Glu-tRNA(Gln). The sequence is that of Aspartyl/glutamyl-tRNA(Asn/Gln) amidotransferase subunit C from Pseudomonas paraeruginosa (strain DSM 24068 / PA7) (Pseudomonas aeruginosa (strain PA7)).